A 377-amino-acid polypeptide reads, in one-letter code: Probable sensor histidine kinase HK (377 aa).

Disordered regions lie at residues 1 to 169 and 346 to 377; these read MAHP…RPAD and LPTP…TSDQ. Residues 10–54 are compositionally biased toward basic residues; the sequence is RLQRRHGARSGSSRCRHRRPVPRRRSRSRPRWRAARAHRRHHRRS. The segment covering 84-98 has biased composition (basic and acidic residues); that stretch reads RRPDPRGGANTDHHA. Basic residues-rich tracts occupy residues 99–115 and 137–146; these read APRH…RRRD and TTVRRRRQPR. The Histidine kinase domain maps to 146 to 350; the sequence is RITHPVGTAD…ELRITLPTPR (205 aa). Position 149 is a phosphohistidine; by autocatalysis (histidine 149). A compositionally biased stretch (basic and acidic residues) spans 352 to 377; it reads PFHEELPRITSSDTKDPNREHDTSDQ.

In terms of processing, autophosphorylated.

It carries out the reaction ATP + protein L-histidine = ADP + protein N-phospho-L-histidine.. Member of the two-component system HK/TcrA. Phosphorylates TcrA. The protein is Probable sensor histidine kinase HK of Mycobacterium tuberculosis (strain CDC 1551 / Oshkosh).